Reading from the N-terminus, the 88-residue chain is Class II hydrophobin 1 (88 aa).

The N-terminal stretch at 1–15 (MKFFIATIFATGALA) is a signal peptide. Disulfide bonds link C19-C69, C29-C59, C30-C42, and C70-C81.

The protein belongs to the cerato-ulmin hydrophobin family. In terms of assembly, homodimer. Homodimers further self-assemble to form highly ordered films at water-air interfaces through intermolecular interactions.

The protein localises to the secreted. Its subcellular location is the cell wall. Functionally, aerial growth, conidiation, and dispersal of filamentous fungi in the environment rely upon a capability of their secreting small amphipathic proteins called hydrophobins (HPBs) with low sequence identity. Class I can self-assemble into an outermost layer of rodlet bundles on aerial cell surfaces, conferring cellular hydrophobicity that supports fungal growth, development and dispersal; whereas Class II form highly ordered films at water-air interfaces through intermolecular interactions but contribute nothing to the rodlet structure. In Trichoderma asperellum (strain ATCC 204424 / CBS 433.97 / NBRC 101777), this protein is Class II hydrophobin 1.